The following is a 419-amino-acid chain: UDP-N-acetylglucosamine 1-carboxyvinyltransferase 2 (419 aa).

Phosphoenolpyruvate is bound at residue 22–23 (KN). A UDP-N-acetyl-alpha-D-glucosamine-binding site is contributed by arginine 92. Cysteine 116 serves as the catalytic Proton donor. Position 116 is a 2-(S-cysteinyl)pyruvic acid O-phosphothioketal (cysteine 116). UDP-N-acetyl-alpha-D-glucosamine is bound by residues 121 to 125 (RPIDL), aspartate 306, and isoleucine 328.

The protein belongs to the EPSP synthase family. MurA subfamily.

The protein resides in the cytoplasm. It carries out the reaction phosphoenolpyruvate + UDP-N-acetyl-alpha-D-glucosamine = UDP-N-acetyl-3-O-(1-carboxyvinyl)-alpha-D-glucosamine + phosphate. It participates in cell wall biogenesis; peptidoglycan biosynthesis. Cell wall formation. Adds enolpyruvyl to UDP-N-acetylglucosamine. This is UDP-N-acetylglucosamine 1-carboxyvinyltransferase 2 from Streptococcus pyogenes serotype M1.